A 149-amino-acid chain; its full sequence is Transcriptional repressor NrdR (149 aa).

A zinc finger spans residues 3–34; that stretch reads CPFCFAVDTKVIDSRLVGEGSSVRRRRQCLVC. The ATP-cone domain maps to 49–139; the sequence is PRVVKSNDVR…VYRSFEDIKE (91 aa).

It belongs to the NrdR family. Zn(2+) serves as cofactor.

Negatively regulates transcription of bacterial ribonucleotide reductase nrd genes and operons by binding to NrdR-boxes. This is Transcriptional repressor NrdR from Escherichia coli O139:H28 (strain E24377A / ETEC).